The chain runs to 211 residues: Urease accessory protein UreG (211 aa).

8–15 (GPVGSGKT) serves as a coordination point for GTP.

Belongs to the SIMIBI class G3E GTPase family. UreG subfamily. Homodimer. UreD, UreF and UreG form a complex that acts as a GTP-hydrolysis-dependent molecular chaperone, activating the urease apoprotein by helping to assemble the nickel containing metallocenter of UreC. The UreE protein probably delivers the nickel.

It is found in the cytoplasm. Functionally, facilitates the functional incorporation of the urease nickel metallocenter. This process requires GTP hydrolysis, probably effectuated by UreG. The protein is Urease accessory protein UreG of Metallosphaera sedula (strain ATCC 51363 / DSM 5348 / JCM 9185 / NBRC 15509 / TH2).